Here is a 359-residue protein sequence, read N- to C-terminus: Protein RecA (359 aa).

Residue 74–81 (GPESSGKT) coordinates ATP.

Belongs to the RecA family.

Its subcellular location is the cytoplasm. In terms of biological role, can catalyze the hydrolysis of ATP in the presence of single-stranded DNA, the ATP-dependent uptake of single-stranded DNA by duplex DNA, and the ATP-dependent hybridization of homologous single-stranded DNAs. It interacts with LexA causing its activation and leading to its autocatalytic cleavage. The sequence is that of Protein RecA from Anaplasma marginale (strain St. Maries).